A 198-amino-acid polypeptide reads, in one-letter code: dITP/XTP pyrophosphatase (198 aa).

Substrate is bound at residue 7–12 (THNPHK). Mg(2+)-binding residues include E40 and D69. The active-site Proton acceptor is D69. Substrate contacts are provided by residues T70, 151-154 (FGYD), K174, and 179-180 (HR).

It belongs to the HAM1 NTPase family. As to quaternary structure, homodimer. Requires Mg(2+) as cofactor.

The catalysed reaction is XTP + H2O = XMP + diphosphate + H(+). It catalyses the reaction dITP + H2O = dIMP + diphosphate + H(+). The enzyme catalyses ITP + H2O = IMP + diphosphate + H(+). Functionally, pyrophosphatase that catalyzes the hydrolysis of nucleoside triphosphates to their monophosphate derivatives, with a high preference for the non-canonical purine nucleotides XTP (xanthosine triphosphate), dITP (deoxyinosine triphosphate) and ITP. Seems to function as a house-cleaning enzyme that removes non-canonical purine nucleotides from the nucleotide pool, thus preventing their incorporation into DNA/RNA and avoiding chromosomal lesions. The chain is dITP/XTP pyrophosphatase from Thermoanaerobacter pseudethanolicus (strain ATCC 33223 / 39E) (Clostridium thermohydrosulfuricum).